The chain runs to 410 residues: Chitin deacetylase 3 (410 aa).

A signal peptide spans 1–18 (MYGHLSLSTLSLLAVVAA). A propeptide spanning residues 19 to 39 (APFPESWLQPRDSDVSQLFRR) is cleaved from the precursor. Residues Asn-61 and Asn-80 are each glycosylated (N-linked (GlcNAc...) asparagine). The region spanning 124 to 314 (KVWALSFDDG…KAVANGWSVK (191 aa)) is the NodB homology domain. Asp-131 (proton acceptor) is an active-site residue. Acetate is bound at residue Asp-131. Asp-132 serves as a coordination point for Co(2+). Asn-149 carries N-linked (GlcNAc...) asparagine glycosylation. Co(2+)-binding residues include His-183 and His-187. Position 225 (Tyr-225) interacts with acetate. The N-linked (GlcNAc...) asparagine glycan is linked to Asn-279. Residue His-289 is the Proton donor of the active site. A glycan (N-linked (GlcNAc...) asparagine) is linked at Asn-293. Residue Ser-385 is the site of GPI-anchor amidated serine attachment. Residues 386 to 410 (SSWPIANRPSLFVIACGLALAAIMV) constitute a propeptide, removed in mature form.

This sequence belongs to the polysaccharide deacetylase family. Requires Co(2+) as cofactor.

The protein resides in the cell membrane. The enzyme catalyses [(1-&gt;4)-N-acetyl-beta-D-glucosaminyl](n) + n H2O = chitosan + n acetate. Its function is as follows. Hydrolyzes the N-acetamido groups of N-acetyl-D-glucosamine residues in chitin to form chitosan and acetate. Chitosan is required to anchor melanin to the cell wall, for maintenance of cell wall integrity, and for proper cytokinesis. Chitosan offers an advantage during infection as it is less readily detected than chitin by host immunosurveillance mechanisms. In Cryptococcus neoformans var. neoformans serotype D (strain JEC21 / ATCC MYA-565) (Filobasidiella neoformans), this protein is Chitin deacetylase 3.